Here is a 406-residue protein sequence, read N- to C-terminus: MVHCAGCKRPILDRFLLNVLDRAWHVKCVQCCECKCNLTEKCFSREGKLYCKNDFFRCFGTKCAGCAQGISPSDLVRRARSKVFHLNCFTCMMCNKQLSTGEELYIIDENKFVCKEDYLSNSSVAKENSLHSATTGSDPSLSPDSQDPSQDDAKDSESANVSDKEAGSNENDDQNLGAKRRGPRTTIKAKQLETLKAAFAATPKPTRHIREQLAQETGLNMRVIQVWFQNRRSKERRMKQLSALGARRHAFFRSPRRMRPLVDRLEPGELIPNGPFSFYGDYQSEYYGPGGNYDFFPQGPPSSQAQTPVDLPFVPSSGPSGTPLGGLEHPLPGHHPSSEAQRFTDILAHPPGDSPSPEPSLPGPLHSMSAEVFGPSPPFSSLSVNGGASYGNHLSHPPEMNEAAVW.

LIM zinc-binding domains lie at 4 to 54 and 63 to 117; these read CAGC…CKND and CAGC…CKED. Disordered regions lie at residues 128–187 and 293–374; these read NSLH…RTTI and YDFF…EVFG. The span at 137-148 shows a compositional bias: low complexity; it reads SDPSLSPDSQDP. The span at 151–167 shows a compositional bias: basic and acidic residues; it reads DDAKDSESANVSDKEAG. Ser162 carries the post-translational modification Phosphoserine. The segment at residues 180 to 239 is a DNA-binding region (homeobox); the sequence is RRGPRTTIKAKQLETLKAAFAATPKPTRHIREQLAQETGLNMRVIQVWFQNRRSKERRMK. Low complexity predominate over residues 315 to 327; it reads PSSGPSGTPLGGL. A compositionally biased stretch (pro residues) spans 352-362; it reads GDSPSPEPSLP.

In terms of assembly, interacts with LDB1 via the tandem LIM domains. As to expression, expressed in the brain, thymus, and tonsils. Expressed in samples from patients with chronic myeloid leukemia (CML) and in 58% of acute myeloid leukemia (AML) cell lines.

Its subcellular location is the nucleus. Functionally, potential transcription factor. May play a role in early mesoderm formation and later in lateral mesoderm differentiation and neurogenesis. The sequence is that of LIM/homeobox protein Lhx1 (LHX1) from Homo sapiens (Human).